The primary structure comprises 364 residues: DNA replication and repair protein RecF (364 aa).

An ATP-binding site is contributed by 23–30; sequence GPNGIGKS.

The protein belongs to the RecF family.

It localises to the cytoplasm. The RecF protein is involved in DNA metabolism; it is required for DNA replication and normal SOS inducibility. RecF binds preferentially to single-stranded, linear DNA. It also seems to bind ATP. This Synechococcus sp. (strain CC9605) protein is DNA replication and repair protein RecF.